The chain runs to 342 residues: P2Y purinoceptor 12 (342 aa).

Over 1–27 (MQAVDNLTSAPGNTSLCTRDYKITQVL) the chain is Extracellular. Residues Asn-6 and Asn-13 are each glycosylated (N-linked (GlcNAc...) asparagine). 2 disulfide bridges follow: Cys-17/Cys-270 and Cys-97/Cys-175. The chain crosses the membrane as a helical span at residues 28–50 (FPLLYTVLFFVGLITNGLAMRIF). The Cytoplasmic portion of the chain corresponds to 51-61 (FQIRSKSNFII). Phosphoserine occurs at positions 55 and 57. Residues 62–82 (FLKNTVISDLLMILTFPFKIL) form a helical membrane-spanning segment. Topologically, residues 83–97 (SDAKLGTGPLRTFVC) are extracellular. Arg-93, Cys-97, and Tyr-105 together coordinate ADP. A helical membrane pass occupies residues 98–118 (QVTSVIFYFTMYISISFLGLI). At 119–142 (TIDRYQKTTRPFKTSNPKNLLGAK) the chain is on the cytoplasmic side. Residues 143-162 (ILSVVIWAFMFLLSLPNMIL) form a helical membrane-spanning segment. ADP contacts are provided by residues 156–159 (SLPN), 175–179 (CSFLK), His-187, and Asn-191. Residues 163 to 185 (TNRQPRDKNVKKCSFLKSEFGLV) are Extracellular-facing. Residues 186–207 (WHEIVNYICQVIFWINFLIVIV) form a helical membrane-spanning segment. Residues 208 to 233 (CYTLITKELYRSYVRTRGVGKVPRKK) are Cytoplasmic-facing. Residues 234–259 (VNVKVFIIIAVFFICFVPFHFARIPY) traverse the membrane as a helical segment. ADP-binding positions include 256–259 (RIPY), Gln-263, and Lys-280. Topologically, residues 260-278 (TLSQTRDVFDCTAENTLFY) are extracellular. Residues 279–298 (VKESTLWLTSLNACLDPFIY) traverse the membrane as a helical segment. Residues 299–342 (FFLCKSFRNSLISMLKCPNSATSLSQDNRKKEQDGGDPNEETPM) lie on the Cytoplasmic side of the membrane. The disordered stretch occupies residues 319 to 342 (ATSLSQDNRKKEQDGGDPNEETPM). The span at 333–342 (GGDPNEETPM) shows a compositional bias: acidic residues.

It belongs to the G-protein coupled receptor 1 family. In terms of tissue distribution, highly expressed in the platelets, lower levels in the brain. Lowest levels in the lung, appendix, pituitary and adrenal gland. Expressed in the spinal cord and in the fetal brain.

It localises to the cell membrane. In terms of biological role, receptor for ADP and ATP coupled to G-proteins that inhibit the adenylyl cyclase second messenger system. Not activated by UDP and UTP. Required for normal platelet aggregation and blood coagulation. This chain is P2Y purinoceptor 12 (P2RY12), found in Homo sapiens (Human).